A 67-amino-acid polypeptide reads, in one-letter code: Beta-defensin 36 (67 aa).

The signal sequence occupies residues 1–22; the sequence is MKLLLLTLAALLLVSQLTPGDA. Disulfide bonds link Cys-25-Cys-52, Cys-32-Cys-46, and Cys-36-Cys-53.

This sequence belongs to the beta-defensin family.

It localises to the secreted. In terms of biological role, has antibacterial activity. The chain is Beta-defensin 36 (Defb36) from Mus musculus (Mouse).